The primary structure comprises 344 residues: MAIQSSSSGSKPPAPKRLVAPEATAAEGDGGRDEGLRPRRLADYIGQSELKQVLGIAVEATRLRNDALDHVLLYGPPGLGKTTMALVLAEELGVSCRIASAPALERPRDIVGLLMNLQPRELLFIDEIHRLNRVAEELLYPAMEDFRLDLTVGAGPAARTRSLELPPFTLVGATTKAGSLSSPLRDRFGLIQRLEFYSCSDLEAIVSRSAQLLQLELAAEAAAEIARRCRGTPRIANRLLRRVRDFASVRGIAAVGAPVVVEALAMHRVDGRGLDPSDRRLLSLLETSYGGGPAGLDTLAAALGEDPDTLEAVVEPFLLQLGFLQRTPRGRVLTDAGRAHLEAA.

The segment covering 1–10 (MAIQSSSSGS) has biased composition (low complexity). Residues 1–37 (MAIQSSSSGSKPPAPKRLVAPEATAAEGDGGRDEGLR) are disordered. A large ATPase domain (RuvB-L) region spans residues 13 to 197 (PAPKRLVAPE…FGLIQRLEFY (185 aa)). Residues Leu-36, Arg-37, Gly-78, Lys-81, Thr-82, Thr-83, 144-146 (EDF), Arg-187, Tyr-197, and Arg-234 contribute to the ATP site. Mg(2+) is bound at residue Thr-82. A small ATPAse domain (RuvB-S) region spans residues 198–268 (SCSDLEAIVS…VVVEALAMHR (71 aa)). Positions 271–344 (GRGLDPSDRR…DAGRAHLEAA (74 aa)) are head domain (RuvB-H). Arg-326 and Arg-331 together coordinate DNA.

Belongs to the RuvB family. As to quaternary structure, homohexamer. Forms an RuvA(8)-RuvB(12)-Holliday junction (HJ) complex. HJ DNA is sandwiched between 2 RuvA tetramers; dsDNA enters through RuvA and exits via RuvB. An RuvB hexamer assembles on each DNA strand where it exits the tetramer. Each RuvB hexamer is contacted by two RuvA subunits (via domain III) on 2 adjacent RuvB subunits; this complex drives branch migration. In the full resolvosome a probable DNA-RuvA(4)-RuvB(12)-RuvC(2) complex forms which resolves the HJ.

The protein resides in the cytoplasm. The enzyme catalyses ATP + H2O = ADP + phosphate + H(+). The RuvA-RuvB-RuvC complex processes Holliday junction (HJ) DNA during genetic recombination and DNA repair, while the RuvA-RuvB complex plays an important role in the rescue of blocked DNA replication forks via replication fork reversal (RFR). RuvA specifically binds to HJ cruciform DNA, conferring on it an open structure. The RuvB hexamer acts as an ATP-dependent pump, pulling dsDNA into and through the RuvAB complex. RuvB forms 2 homohexamers on either side of HJ DNA bound by 1 or 2 RuvA tetramers; 4 subunits per hexamer contact DNA at a time. Coordinated motions by a converter formed by DNA-disengaged RuvB subunits stimulates ATP hydrolysis and nucleotide exchange. Immobilization of the converter enables RuvB to convert the ATP-contained energy into a lever motion, pulling 2 nucleotides of DNA out of the RuvA tetramer per ATP hydrolyzed, thus driving DNA branch migration. The RuvB motors rotate together with the DNA substrate, which together with the progressing nucleotide cycle form the mechanistic basis for DNA recombination by continuous HJ branch migration. Branch migration allows RuvC to scan DNA until it finds its consensus sequence, where it cleaves and resolves cruciform DNA. This chain is Holliday junction branch migration complex subunit RuvB, found in Synechococcus sp. (strain RCC307).